Reading from the N-terminus, the 286-residue chain is Pantothenate synthetase (286 aa).

ATP is bound at residue 30 to 37 (MGNLHAGH). His-37 serves as the catalytic Proton donor. Gln-61 is a binding site for (R)-pantoate. Gln-61 lines the beta-alanine pocket. ATP is bound at residue 149 to 152 (GQKD). (R)-pantoate is bound at residue Gln-155. ATP is bound by residues Val-178 and 186 to 189 (LSSR).

This sequence belongs to the pantothenate synthetase family. In terms of assembly, homodimer.

Its subcellular location is the cytoplasm. The enzyme catalyses (R)-pantoate + beta-alanine + ATP = (R)-pantothenate + AMP + diphosphate + H(+). Its pathway is cofactor biosynthesis; (R)-pantothenate biosynthesis; (R)-pantothenate from (R)-pantoate and beta-alanine: step 1/1. Its function is as follows. Catalyzes the condensation of pantoate with beta-alanine in an ATP-dependent reaction via a pantoyl-adenylate intermediate. The polypeptide is Pantothenate synthetase (Stutzerimonas stutzeri (strain A1501) (Pseudomonas stutzeri)).